Reading from the N-terminus, the 332-residue chain is Heptahelical transmembrane protein 1 (332 aa).

The tract at residues 1 to 52 (MDQNGHNDEAETVSCGNGNCKSKIVPGDDHGGDESSGTKRRKKRKTQQKTMK) is disordered. Residues 1 to 98 (MDQNGHNDEA…VFSFHNESLN (98 aa)) are Cytoplasmic-facing. A compositionally biased stretch (basic and acidic residues) spans 26 to 37 (PGDDHGGDESSG). The segment covering 38 to 52 (TKRRKKRKTQQKTMK) has biased composition (basic residues). Residues 99–119 (VWTHLIGFIFFVALTVANIIH) traverse the membrane as a helical segment. At 120–138 (HDGFFPVDAKSPGNVTRWP) the chain is on the extracellular side. Residues 139–159 (FFVFLGGSMFCLLASSICHLF) traverse the membrane as a helical segment. At 160-172 (CCHSKELNVFLLR) the chain is on the cytoplasmic side. A helical membrane pass occupies residues 173 to 193 (IDYAGITAMIITSFFPPIFYI). The Extracellular portion of the chain corresponds to 194-199 (FQCTPR). Residues 200–220 (WYFIYLAGITSMGIFTIITLF) traverse the membrane as a helical segment. Residues 221-233 (TPSLSAPKYRAFR) are Cytoplasmic-facing. The chain crosses the membrane as a helical span at residues 234–254 (ALLFASMGLFGIVPAAHALVV). Topologically, residues 255 to 262 (NWGNPQRN) are extracellular. Residues 263 to 283 (VTLVYELLMAVFYLVGTGFYV) traverse the membrane as a helical segment. Topologically, residues 284–303 (GRVPERLKPGWFDRVGHSHQ) are cytoplasmic. The chain crosses the membrane as a helical span at residues 304-324 (IFHVFVLLGALSHYAAALLFL). At 325-332 (DWRDHVGC) the chain is on the extracellular side.

The protein belongs to the ADIPOR family. Interacts (via N-terminus) with SCRM/ICE1. As to expression, expressed in roots, hypocotyls, vasculature of cotyledons and leaves, hydathodes and guard cells. In reproductive organs, expressed in trichomes, veins of sepals, stamens and stigmata of pistils.

The protein resides in the membrane. In terms of biological role, may act as a negative regulator of abscisic acid (ABA)-mediated osmotic stress signaling and function in cross-talk between cold and osmotic signaling. This Arabidopsis thaliana (Mouse-ear cress) protein is Heptahelical transmembrane protein 1 (HHP1).